Reading from the N-terminus, the 177-residue chain is Protein PrsK (177 aa).

A signal peptide spans 1-21 (MIKSTGALLLFAALSAGQAMA).

The protein localises to the fimbrium. This chain is Protein PrsK (prsK), found in Escherichia coli.